A 188-amino-acid polypeptide reads, in one-letter code: MSEMAELSELYEESSDLQMDVMPGEGDLPQMEVGSGSRELSLRPSRNGAQPQLEEEGPMEEEEAQPMAAPEGKRSLASGPNAGEQPGQVAGADFESEDEGEEFDDWEDDYDYPEEEQLSGAGYRVSAALEEADKMFLRTREPALDGGFQMHYEKTPFDQLAFIEELFSLMVVNRLTEELGCDEIIDRE.

The tract at residues 1–122 (MSEMAELSEL…PEEEQLSGAG (122 aa)) is disordered. 2 stretches are compositionally biased toward acidic residues: residues 53–64 (LEEEGPMEEEEA) and 94–117 (FESE…EEEQ). The interval 55–121 (EEGPMEEEEA…YPEEEQLSGA (67 aa)) is interaction with NR0B2. The short motif at 179–183 (LGCDE) is the LXCXE motif element.

In terms of assembly, interacts via its LXCXE motif with the entire pocket region of RB1. Interacts with EP300, NR0B2 and TRIM27.

It is found in the nucleus. The protein resides in the cytoplasm. In terms of biological role, interacts with RB1 and EP300 and acts as a repressor of MYOD1 transactivation. Inhibits EP300 and CBP histone acetyltransferase activity. May be involved in coupling cell cycle exit to the transcriptional activation of genes required for cellular differentiation. May act as a candidate coinhibitory factor for NR0B2 that can be directly linked to transcription inhibitory mechanisms. In Pongo abelii (Sumatran orangutan), this protein is EP300-interacting inhibitor of differentiation 1.